We begin with the raw amino-acid sequence, 403 residues long: Argininosuccinate synthase (403 aa).

ATP contacts are provided by residues A13–S21 and A40. Y92 and S97 together coordinate L-citrulline. G122 is an ATP binding site. L-aspartate is bound by residues T124, N128, and D129. L-citrulline is bound at residue N128. L-citrulline-binding residues include R132, S181, S190, E266, and Y278.

It belongs to the argininosuccinate synthase family. Type 1 subfamily. In terms of assembly, homotetramer.

The protein localises to the cytoplasm. The catalysed reaction is L-citrulline + L-aspartate + ATP = 2-(N(omega)-L-arginino)succinate + AMP + diphosphate + H(+). Its pathway is amino-acid biosynthesis; L-arginine biosynthesis; L-arginine from L-ornithine and carbamoyl phosphate: step 2/3. In Aliivibrio fischeri (strain MJ11) (Vibrio fischeri), this protein is Argininosuccinate synthase.